The primary structure comprises 66 residues: Ornithorhynchus venom defensin-like peptide A (66 aa).

Residues 1-22 (MRLTYLLLLLVAVLFQAGSGSA) form the signal peptide. Positions 23-24 (EP) are excised as a propeptide. 3 disulfides stabilise this stretch: Cys-33-Cys-63, Cys-40-Cys-56, and Cys-48-Cys-64.

Produced by the crural gland and detected in venom from the spur located on each male hind leg. Is the only OvDLP that is expressed in venom gland alone.

It is found in the secreted. Does not show antimicrobial, myotoxic, hemolytic and cell-promoting activities. This chain is Ornithorhynchus venom defensin-like peptide A, found in Ornithorhynchus anatinus (Duckbill platypus).